The primary structure comprises 293 residues: Undecaprenyl-diphosphatase (293 aa).

7 consecutive transmembrane segments (helical) span residues 57 to 77 (PGVS…IVYF), 106 to 126 (LAIA…KLFW), 134 to 154 (IRSL…LALA), 172 to 192 (GFVV…RSGS), 212 to 232 (FLLG…DAFA), 239 to 259 (VLPL…AIDW), and 268 to 288 (STWI…AWWL).

This sequence belongs to the UppP family.

It is found in the cell inner membrane. It catalyses the reaction di-trans,octa-cis-undecaprenyl diphosphate + H2O = di-trans,octa-cis-undecaprenyl phosphate + phosphate + H(+). Catalyzes the dephosphorylation of undecaprenyl diphosphate (UPP). Confers resistance to bacitracin. This chain is Undecaprenyl-diphosphatase, found in Prochlorococcus marinus (strain MIT 9303).